The following is a 256-amino-acid chain: Homeobox-leucine zipper protein HOX28 (256 aa).

Residues 56-86 are disordered; it reads ACSPGSPVSSGSGKRGSGSGSGDEVDDAGCD. Low complexity predominate over residues 58–67; the sequence is SPGSPVSSGS. Positions 91–150 form a DNA-binding region, homeobox; it reads GARKKLRLSKDQAAVLEECFKTHHTLTPKQKVALAKSLNLRPRQVEVWFQNRRARTKLKQ. The segment at 149–193 is leucine-zipper; the sequence is KQTEVDCEHLKRWCDQLADDNRRLHKELAELRALKATPTPPAAAP.

Belongs to the HD-ZIP homeobox family. Class II subfamily. As to expression, expressed in seedlings, roots, stems and panicles.

Its subcellular location is the nucleus. Its function is as follows. Probable transcription factor. The chain is Homeobox-leucine zipper protein HOX28 (HOX28) from Oryza sativa subsp. indica (Rice).